Consider the following 343-residue polypeptide: 4-hydroxy-2-oxovalerate aldolase (343 aa).

The Pyruvate carboxyltransferase domain occupies 5-256 (ILLCDPTLRD…ETGIDLYKIL (252 aa)). 13–14 (RD) serves as a coordination point for substrate. Asp-14 contacts Mn(2+). Residue His-17 is the Proton acceptor of the active site. Substrate-binding residues include Ser-168 and His-195. Mn(2+)-binding residues include His-195 and His-197.

The protein belongs to the 4-hydroxy-2-oxovalerate aldolase family. In terms of assembly, interacts with MhpF.

The enzyme catalyses (S)-4-hydroxy-2-oxopentanoate = acetaldehyde + pyruvate. It participates in aromatic compound metabolism; 3-phenylpropanoate degradation. Its function is as follows. Catalyzes the retro-aldol cleavage of 4-hydroxy-2-oxopentanoate to pyruvate and acetaldehyde. Is involved in the meta-cleavage pathway for the degradation of aromatic compounds. This is 4-hydroxy-2-oxovalerate aldolase from Pectobacterium atrosepticum (strain SCRI 1043 / ATCC BAA-672) (Erwinia carotovora subsp. atroseptica).